The sequence spans 296 residues: Polyadenylate-binding protein 2-A (296 aa).

Residues 1–106 (MAAVSSVASL…GELTGDQTIE (106 aa)) form a disordered region. The segment covering 71–82 (GRGGSGGGGAGG) has biased composition (gly residues). Acidic residues predominate over residues 84 to 97 (EELEDEELEEEEPG). Positions 107 to 141 (DPELEAIKARVREMEEEAEKLKELQNEVEKQMNMS) form a coiled coil. Residues 146 to 296 (NAGPVIMSVE…ARATSWYTPY (151 aa)) are necessary for homooligomerization. The region spanning 163–240 (RSIYVGNVDY…RQIKVVPKRT (78 aa)) is the RRM domain.

As to quaternary structure, monomer and homooligomer. Binds RNA as a monomer and oligomerizes when bound to poly(A). In terms of tissue distribution, shows dynamic spatial expression throughout development. First expressed in the animal pole region of the egg and this pattern persists through to the blastula stage. In gastrula and neurula embryos, expressed mainly in ectodermal, neural and epidermal regions. Neural tissue-specific expression pattern persists into tailbud stage when expression is localized to the brain and spinal cord. At early tadpole stage, expression becomes gradually confined to the specific vesicle regions of the developing brain. At stage 39, expressed in the telencephalon and mesencephalon regions of the brain. Also detected in the eye and olfactory pit at the tadpole stage. Expressed during gut endoderm development. At stage 35, expressed exclusively in the anterior portion of the gut endoderm, which includes the prospective liver, stomach and pancreas. As development proceeds, expression becomes restricted to the pancreas, and by stage 46/47 (the seventh day of development) expression is localized exclusively to the pancreas. Expressed in most adult tissues.

The protein resides in the nucleus. It is found in the cytoplasm. Its function is as follows. Involved in the 3'-end formation of mRNA precursors (pre-mRNA) by the addition of a poly(A) tail of 200-250 nt to the upstream cleavage product. Stimulates poly(A) polymerase (PAPOLA) conferring processivity on the poly(A) tail elongation reaction and also controls the poly(A) tail length. Increases the affinity of poly(A) polymerase for RNA. Binds to poly(A) and to poly(G) with high affinity. May protect the poly(A) tail from degradation. The chain is Polyadenylate-binding protein 2-A (pabpn1-a) from Xenopus laevis (African clawed frog).